A 686-amino-acid chain; its full sequence is X-linked interleukin-1 receptor accessory protein-like 2 (686 aa).

The signal sequence occupies residues Met-1 to Ser-16. Over Thr-17–Lys-354 the chain is Extracellular. Residues Ile-32–Thr-132 enclose the Ig-like C2-type 1 domain. Residues Cys-53 and Cys-116 are joined by a disulfide bond. N-linked (GlcNAc...) asparagine glycans are attached at residues Asn-63, Asn-120, Asn-136, Asn-211, and Asn-328. 2 Ig-like C2-type domains span residues Cys-141 to Thr-232 and Pro-239 to Arg-347. Intrachain disulfides connect Cys-162–Cys-214 and Cys-265–Cys-331. Residues Ile-355 to Tyr-375 form a helical membrane-spanning segment. Residues Lys-376–Trp-686 lie on the Cytoplasmic side of the membrane. One can recognise a TIR domain in the interval Lys-400 to Met-556. Glu-488 is an active-site residue.

Belongs to the interleukin-1 receptor family. As to expression, detected in fetal brain after day 12.5, in particular in parts of the diencephalon and in the basal plate of the spinal cord. In postnatal brain detected in cerebral cortex, olfactory bulb, in the CA1 region of the hippocampus and in Purkinje cells of the Xth cerebellar lobule.

The protein resides in the membrane. The catalysed reaction is NAD(+) + H2O = ADP-D-ribose + nicotinamide + H(+). This chain is X-linked interleukin-1 receptor accessory protein-like 2 (Il1rapl2), found in Mus musculus (Mouse).